The chain runs to 211 residues: Glutathione S-transferase class-mu 28 kDa isozyme (211 aa).

At Ala-2 the chain carries N-acetylalanine. The GST N-terminal domain occupies 4–86 (EHIKVIYFDG…YMAKKHHMMG (83 aa)). Residues Tyr-10, 10–11 (YF), Arg-16, 41–45 (WPKIK), Leu-53, 55–56 (AV), and 70–71 (ES) contribute to the glutathione site. One can recognise a GST C-terminal domain in the interval 88 to 211 (TDEEYYSVEK…YLSNRPATPF (124 aa)).

This sequence belongs to the GST superfamily. Mu family. In terms of assembly, homodimer. As to expression, in the adult, expressed in excretory epithelial cells but absent from the caecal epithelium and flame cells. Also expressed in the tegument and its extensions into the parenchyma. In the schistosomulum, expressed in the tegument and associated structures. Not expressed in digestive tract, reproductive organs or muscles (at protein level).

The catalysed reaction is RX + glutathione = an S-substituted glutathione + a halide anion + H(+). Conjugation of reduced glutathione to a wide number of exogenous and endogenous hydrophobic electrophiles. Functionally, GST isoenzymes appear to play a central role in the parasite detoxification system. Other functions are also suspected including a role in increasing the solubility of haematin in the parasite gut. In Schistosoma mansoni (Blood fluke), this protein is Glutathione S-transferase class-mu 28 kDa isozyme (GST28).